The sequence spans 442 residues: tRNA-2-methylthio-N(6)-dimethylallyladenosine synthase (442 aa).

Positions 3–118 (KKVFIKTFGC…LPELLNARAA (116 aa)) constitute an MTTase N-terminal domain. Residues Cys-12, Cys-49, Cys-81, Cys-155, Cys-159, and Cys-162 each coordinate [4Fe-4S] cluster. One can recognise a Radical SAM core domain in the interval 141 to 374 (RVEGSSAFVS…QAVINNNIKD (234 aa)). The TRAM domain maps to 377-440 (DERVGTVQRL…TFTLRGEVVV (64 aa)).

This sequence belongs to the methylthiotransferase family. MiaB subfamily. Monomer. It depends on [4Fe-4S] cluster as a cofactor.

It localises to the cytoplasm. It catalyses the reaction N(6)-dimethylallyladenosine(37) in tRNA + (sulfur carrier)-SH + AH2 + 2 S-adenosyl-L-methionine = 2-methylsulfanyl-N(6)-dimethylallyladenosine(37) in tRNA + (sulfur carrier)-H + 5'-deoxyadenosine + L-methionine + A + S-adenosyl-L-homocysteine + 2 H(+). Functionally, catalyzes the methylthiolation of N6-(dimethylallyl)adenosine (i(6)A), leading to the formation of 2-methylthio-N6-(dimethylallyl)adenosine (ms(2)i(6)A) at position 37 in tRNAs that read codons beginning with uridine. This Delftia acidovorans (strain DSM 14801 / SPH-1) protein is tRNA-2-methylthio-N(6)-dimethylallyladenosine synthase.